The sequence spans 511 residues: Zinc finger CCCH-type with G patch domain-containing protein (511 aa).

Met1 carries the post-translational modification N-acetylmethionine. Ser70 is modified (phosphoserine). Positions Pro92–Ser129 are disordered. A compositionally biased stretch (polar residues) spans Asp98–Ala115. Residues Leu116 to Glu127 show a composition bias toward acidic residues. A C3H1-type zinc finger spans residues Lys174–Val200. The tract at residues Pro266–Val291 is disordered. Ser276 carries the post-translational modification Phosphoserine. The residue at position 280 (Thr280) is a Phosphothreonine. Residues Thr313–Glu359 form the G-patch domain. Ser353 is modified (phosphoserine). Disordered regions lie at residues Lys363–Asn393 and Ala490–Phe511. Residues Gln491–Phe511 are compositionally biased toward basic and acidic residues.

In terms of assembly, interacts with CHD4/Mi-2; the interaction is direct.

Its subcellular location is the nucleus. In terms of biological role, transcription repressor that specifically binds the 5'-GGAG[GA]A[GA]A-3' consensus sequence. Represses transcription by recruiting the chromatin multiprotein complex NuRD to target promoters. Negatively regulates expression of EGFR, a gene involved in cell proliferation, survival and migration. Its ability to repress genes of the EGFR pathway suggest it may act as a tumor suppressor. This is Zinc finger CCCH-type with G patch domain-containing protein (Zgpat) from Mus musculus (Mouse).